A 201-amino-acid polypeptide reads, in one-letter code: MEQPDLFGTLAPLPAIIAGVDEAGRGPLAGAVYAAAVILDPDRPVDGLADSKVLKAEQREALAVQIRAQALAWFVASASVQEIDSLNILRATMLAMQRAVAGLAMAPELAMVDGNQAPKLRCAVQTVIKGDALVPAISAASILAKTARDADLLRLHALYPQYGFDQHKGYGTPQHLSLLREHGPCPEHRRSFAPIKAYGAP.

The 187-residue stretch at 15 to 201 (AIIAGVDEAG…FAPIKAYGAP (187 aa)) folds into the RNase H type-2 domain. The a divalent metal cation site is built by Asp21, Glu22, and Asp113.

It belongs to the RNase HII family. It depends on Mn(2+) as a cofactor. The cofactor is Mg(2+).

The protein resides in the cytoplasm. The enzyme catalyses Endonucleolytic cleavage to 5'-phosphomonoester.. Endonuclease that specifically degrades the RNA of RNA-DNA hybrids. This chain is Ribonuclease HII, found in Bordetella pertussis (strain Tohama I / ATCC BAA-589 / NCTC 13251).